The sequence spans 342 residues: MTLGYIGSYTKKSGKGIYRFKLNDETGVIEALETGYEIEASTYLTRNESFLYAITKEGEECGVASFSIKEDGQLELINKCLESKQGTGCYIQVSSNGKYLFEAVYGAGLARIYKLNQITGAIEKLIEELAHEFPTGSHERQDSSHVHFLNETPDHKYVVATDLGTDRVVTYKFGEDGLKQYAVSQFKNSDGPRHIAFSNDGRHAYIVHELSNEVSVTEYQDGKFIELERHSTIPSDFNGESKLAAVRLSHDGKHLYISNRGHDSIAIFEVLEDGRSLRSIEIQPSYDAFPRDFNITESDNYLICAHQEGESKVSIFERDNITGKLSLKDKKAIANEGVCVLL.

This sequence belongs to the cycloisomerase 2 family.

This is an uncharacterized protein from Staphylococcus epidermidis (strain ATCC 12228 / FDA PCI 1200).